The following is a 216-amino-acid chain: Elongation factor Ts (216 aa).

Residues 81–84 (TDFV) are involved in Mg(2+) ion dislocation from EF-Tu.

Belongs to the EF-Ts family.

The protein resides in the cytoplasm. Functionally, associates with the EF-Tu.GDP complex and induces the exchange of GDP to GTP. It remains bound to the aminoacyl-tRNA.EF-Tu.GTP complex up to the GTP hydrolysis stage on the ribosome. This Geotalea uraniireducens (strain Rf4) (Geobacter uraniireducens) protein is Elongation factor Ts.